The primary structure comprises 1440 residues: Bridge-like lipid transfer protein family member 3A (1440 aa).

The 93-residue stretch at 3–95 folds into the Chorein N-terminal domain; the sequence is GIIKKQILKH…KVEVEMKTCE (93 aa). Disordered stretches follow at residues 267 to 307, 430 to 456, and 751 to 780; these read SAHQ…NSSS, ADSL…FQPP, and KPSA…TEHD. Positions 287 to 307 are enriched in low complexity; it reads SAQQSWAQAFGGSQGNSNSSS. Phosphoserine is present on residues Ser-444, Ser-446, Ser-755, and Ser-758. A coiled-coil region spans residues 837 to 860; it reads ALLRLKEVLQRLQEQLTKDTESMT. The segment at 891–1008 is disordered; that stretch reads VDADSAGSDS…ETAVNGQGEL (118 aa). Basic and acidic residues predominate over residues 911–920; sequence SEDRELKSDA. Residues 985–995 show a composition bias toward low complexity; sequence ASSSPAALKPP. A phosphoserine mark is found at Ser-988, Ser-1103, and Ser-1106. Positions 1106–1180 are disordered; the sequence is SFDGVSLDSS…SPAANSSVSP (75 aa). Residues 1134–1150 are compositionally biased toward low complexity; the sequence is LLESESGPESVPPGSLS. Positions 1151-1180 are enriched in polar residues; the sequence is NVSDNAGVQGSPLVNNYGQGSPAANSSVSP. The stretch at 1401–1435 forms a coiled coil; the sequence is KELPILQKELIETKQALANANQDKEKLLQEIRKYN.

In terms of assembly, homodimer (Potential). Interacts with UHRF1.

It is found in the late endosome. Tube-forming lipid transport protein which probably mediates the transfer of lipids between membranes at organelle contact sites. May be involved in the retrograde traffic of vesicle clusters in the endocytic pathway to the Golgi complex. The chain is Bridge-like lipid transfer protein family member 3A from Homo sapiens (Human).